The chain runs to 416 residues: CinA-like protein (416 aa).

The protein belongs to the CinA family.

The sequence is that of CinA-like protein from Thermosynechococcus vestitus (strain NIES-2133 / IAM M-273 / BP-1).